The primary structure comprises 315 residues: 4-hydroxy-3-methylbut-2-enyl diphosphate reductase (315 aa).

Residue cysteine 12 participates in [4Fe-4S] cluster binding. The (2E)-4-hydroxy-3-methylbut-2-enyl diphosphate site is built by histidine 41 and histidine 74. 2 residues coordinate dimethylallyl diphosphate: histidine 41 and histidine 74. 2 residues coordinate isopentenyl diphosphate: histidine 41 and histidine 74. Residue cysteine 96 participates in [4Fe-4S] cluster binding. Residue histidine 124 coordinates (2E)-4-hydroxy-3-methylbut-2-enyl diphosphate. Histidine 124 is a binding site for dimethylallyl diphosphate. Histidine 124 is an isopentenyl diphosphate binding site. Residue glutamate 126 is the Proton donor of the active site. Residue threonine 168 coordinates (2E)-4-hydroxy-3-methylbut-2-enyl diphosphate. A [4Fe-4S] cluster-binding site is contributed by cysteine 198. (2E)-4-hydroxy-3-methylbut-2-enyl diphosphate-binding residues include serine 226, serine 227, asparagine 228, and serine 270. Positions 226, 227, 228, and 270 each coordinate dimethylallyl diphosphate. Positions 226, 227, 228, and 270 each coordinate isopentenyl diphosphate.

Belongs to the IspH family. Requires [4Fe-4S] cluster as cofactor.

The enzyme catalyses isopentenyl diphosphate + 2 oxidized [2Fe-2S]-[ferredoxin] + H2O = (2E)-4-hydroxy-3-methylbut-2-enyl diphosphate + 2 reduced [2Fe-2S]-[ferredoxin] + 2 H(+). It carries out the reaction dimethylallyl diphosphate + 2 oxidized [2Fe-2S]-[ferredoxin] + H2O = (2E)-4-hydroxy-3-methylbut-2-enyl diphosphate + 2 reduced [2Fe-2S]-[ferredoxin] + 2 H(+). Its pathway is isoprenoid biosynthesis; dimethylallyl diphosphate biosynthesis; dimethylallyl diphosphate from (2E)-4-hydroxy-3-methylbutenyl diphosphate: step 1/1. The protein operates within isoprenoid biosynthesis; isopentenyl diphosphate biosynthesis via DXP pathway; isopentenyl diphosphate from 1-deoxy-D-xylulose 5-phosphate: step 6/6. In terms of biological role, catalyzes the conversion of 1-hydroxy-2-methyl-2-(E)-butenyl 4-diphosphate (HMBPP) into a mixture of isopentenyl diphosphate (IPP) and dimethylallyl diphosphate (DMAPP). Acts in the terminal step of the DOXP/MEP pathway for isoprenoid precursor biosynthesis. The chain is 4-hydroxy-3-methylbut-2-enyl diphosphate reductase from Pseudomonas syringae pv. syringae (strain B728a).